The sequence spans 71 residues: Putative membrane protein insertion efficiency factor (71 aa).

The protein belongs to the UPF0161 family.

The protein localises to the cell membrane. Could be involved in insertion of integral membrane proteins into the membrane. The protein is Putative membrane protein insertion efficiency factor of Desulforudis audaxviator (strain MP104C).